Consider the following 457-residue polypeptide: Argininosuccinate lyase (457 aa).

It belongs to the lyase 1 family. Argininosuccinate lyase subfamily.

Its subcellular location is the cytoplasm. It carries out the reaction 2-(N(omega)-L-arginino)succinate = fumarate + L-arginine. Its pathway is amino-acid biosynthesis; L-arginine biosynthesis; L-arginine from L-ornithine and carbamoyl phosphate: step 3/3. The protein is Argininosuccinate lyase of Shigella boydii serotype 18 (strain CDC 3083-94 / BS512).